We begin with the raw amino-acid sequence, 662 residues long: UPF0313 protein CPF_1407 (662 aa).

The region spanning 296-567 (AIEEVKFSIV…AMQRALLQFK (272 aa)) is the Radical SAM core domain. 3 residues coordinate [4Fe-4S] cluster: C310, C314, and C317. The disordered stretch occupies residues 596-662 (IRDKNSFGKG…QRSSKGKKRR (67 aa)). Positions 618 to 632 (SRNENSGRRESEDKK) are enriched in basic and acidic residues. A compositionally biased stretch (basic residues) spans 633-644 (RSSHSKKQRGNK).

The protein belongs to the UPF0313 family. Requires [4Fe-4S] cluster as cofactor.

This Clostridium perfringens (strain ATCC 13124 / DSM 756 / JCM 1290 / NCIMB 6125 / NCTC 8237 / Type A) protein is UPF0313 protein CPF_1407.